The sequence spans 590 residues: Regulatory solute carrier protein family 1 member 1 (590 aa).

Disordered regions lie at residues 1–116 (MSSS…TQGL), 144–234 (EEGW…PDSE), 277–331 (SPSS…AEES), and 359–466 (EEVT…SHRT). Over residues 16–35 (SSGQSPEAGNPTSLARSVSA) the composition is skewed to polar residues. Low complexity predominate over residues 78–91 (SPCAAAAAPSSAMP). Positions 150 to 161 (ENQNPSQVNDLQ) are enriched in polar residues. Composition is skewed to basic and acidic residues over residues 162-179 (QHQEPENARHEAGPRDAP) and 188-203 (PGERQQKHEVADREAT). Positions 313 to 331 (SSSSVCGSSQPPAESAEES) are enriched in low complexity. Polar residues predominate over residues 362 to 376 (TCQSEGTAWGQTRVN). Composition is skewed to basic and acidic residues over residues 380–395 (RWTESERRTQDEDRPQ) and 404–420 (VKTEKLTDASPDTRIED). Residues 451–465 (SVTVTSAETSNQSHR) show a composition bias toward polar residues. A UBA domain is found at 544–584 (GFPAADIDRILRAGFTLQEALGALHRVGGNADLALLVLLAK).

As to quaternary structure, interacts with YRDC. In terms of tissue distribution, highly expressed in renal outer medulla, renal inner medulla, duodenum, ileum and jejunum. Moderately expressed in renal outer cortex, renal papilla, brain and liver.

The protein localises to the cell membrane. It is found in the nucleus. It localises to the golgi apparatus. The protein resides in the trans-Golgi network. Functionally, mediates transcriptional and post-transcriptional regulation of SLC5A1. Inhibits a dynamin and PKC-dependent exocytotic pathway of SLC5A1. Also involved in transcriptional regulation of SLC22A2. Exhibits glucose-dependent, short-term inhibition of SLC5A1 and SLC22A2 by inhibiting the release of vesicles from the trans-Golgi network. The polypeptide is Regulatory solute carrier protein family 1 member 1 (RSC1A1) (Oryctolagus cuniculus (Rabbit)).